Consider the following 573-residue polypeptide: MANSPHGGVLKDLLARDSPRHAELSTEAETLPALLLSERQLCDLELLLNGGFSPLEGFMTEQDYNGVVKENRLASGALFSMPITLDVDQATIDELSLKAGARITLRDFRDDRNLAILTVEDVYKPDKALEAKEVFGGDEEHPAVQYLYKTAKDFYVGGKLEAVNRLQHYDFVELRYTPSELRAHFDKLGWAKVVAFQTRNPMHRAHRELTVRAARSHHANVLIHPVVGLTKPGDIDHFTRVRVYKALLPRYPNGMAVLGLLPLAMRMGGPREAIWHAIIRKNHGATHFIVGRDHAGPGKNSKGVDFYGPYDAQYAVEKYRDELGIEVVPFQMMTYLPDSDEYAPVDQIPQGVRTLNISGTELRARLRSGREIPEWFSYPEVVKVLRESHPPRSQQGFTIFLTGYQNSGKDQIARALQVTLNQQGGRSVSLFLGETVRHELSSELGFSREDRDKNIARIGFVASELTRSGAAVIAAPIAPFEQARQSARELVEKYGDFYLIHVATSLEYCEKTDKRGIYKKARAGEIKGFTGVDDPYEAPAKPNLVVDAETQSVRSIVHQIILLLESQGLLDRF.

The segment at 1-169 (MANSPHGGVL…LEAVNRLQHY (169 aa)) is N-terminal. Positions 170-394 (DFVELRYTPS…LRESHPPRSQ (225 aa)) are catalytic. A sulfate-binding site is contributed by glutamine 197. ATP is bound by residues 197 to 200 (QTRN) and 291 to 294 (GRDH). Catalysis depends on residues threonine 198, arginine 199, and asparagine 200. Arginine 199 lines the sulfate pocket. Position 295 (alanine 295) interacts with sulfate. Position 333 (methionine 333) interacts with ATP. The interval 395 to 573 (QGFTIFLTGY…LESQGLLDRF (179 aa)) is allosteric regulation domain; adenylyl-sulfate kinase-like. 3'-phosphoadenylyl sulfate is bound by residues 434-437 (ETVR), arginine 451, 477-478 (IA), and arginine 515.

In the N-terminal section; belongs to the sulfate adenylyltransferase family. This sequence in the C-terminal section; belongs to the APS kinase family. Homohexamer. Dimer of trimers.

The protein resides in the cytoplasm. The enzyme catalyses sulfate + ATP + H(+) = adenosine 5'-phosphosulfate + diphosphate. It functions in the pathway sulfur metabolism; hydrogen sulfide biosynthesis; sulfite from sulfate: step 1/3. With respect to regulation, allosterically inhibited by 3'-phosphoadenosine 5'-phosphosulfate (PAPS). Catalyzes the first intracellular reaction of sulfate assimilation, forming adenosine-5'-phosphosulfate (APS) from inorganic sulfate and ATP. Plays an important role in sulfate activation as a component of the biosynthesis pathway of sulfur-containing amino acids. The protein is Sulfate adenylyltransferase of Chaetomium globosum (strain ATCC 6205 / CBS 148.51 / DSM 1962 / NBRC 6347 / NRRL 1970) (Soil fungus).